The primary structure comprises 593 residues: Capsid protein 1 (593 aa).

Belongs to the NCLDV major capsid protein family.

The protein resides in the virion. This chain is Capsid protein 1, found in Acanthamoeba polyphaga mimivirus (APMV).